A 293-amino-acid polypeptide reads, in one-letter code: 33 kDa chaperonin (293 aa).

Disulfide bonds link Cys-238/Cys-240 and Cys-271/Cys-274.

The protein belongs to the HSP33 family. Post-translationally, under oxidizing conditions two disulfide bonds are formed involving the reactive cysteines. Under reducing conditions zinc is bound to the reactive cysteines and the protein is inactive.

The protein resides in the cytoplasm. Functionally, redox regulated molecular chaperone. Protects both thermally unfolding and oxidatively damaged proteins from irreversible aggregation. Plays an important role in the bacterial defense system toward oxidative stress. The chain is 33 kDa chaperonin from Staphylococcus aureus (strain USA300).